The chain runs to 401 residues: S-adenosylmethionine synthase (401 aa).

136-141 (GTGSSD) is an ATP binding site. The tract at residues 278 to 305 (GDDGSVGRGNRSNGLITPSRPMSMEATS) is disordered.

It belongs to the AdoMet synthase 2 family. The cofactor is Mg(2+).

The catalysed reaction is L-methionine + ATP + H2O = S-adenosyl-L-methionine + phosphate + diphosphate. The protein operates within amino-acid biosynthesis; S-adenosyl-L-methionine biosynthesis; S-adenosyl-L-methionine from L-methionine: step 1/1. Its function is as follows. Catalyzes the formation of S-adenosylmethionine from methionine and ATP. This chain is S-adenosylmethionine synthase, found in Methanococcoides burtonii (strain DSM 6242 / NBRC 107633 / OCM 468 / ACE-M).